Reading from the N-terminus, the 315-residue chain is Rhomboid-related protein 4 (315 aa).

Over 1 to 21 (MQRRTRGINTGLLLLLSQVFQ) the chain is Cytoplasmic. A helical transmembrane segment spans residues 22-42 (IGINNIPPVTLATLAVNVWFF). Residues 43–103 (LNPWKPLYHS…KLERRLGSRW (61 aa)) lie on the Lumenal side of the membrane. The chain crosses the membrane as a helical span at residues 104-124 (FAYVIATFSLLTGVVYLLLQF). Topologically, residues 125–137 (TVAELLNQPDFKR) are cytoplasmic. The helical transmembrane segment at 138-154 (NCAVGFSGVLFALKVLS) threads the bilayer. Catalysis depends on S144, which acts as the Nucleophile. Over 155–180 (NHYCPGGFVNILGFPVPNRFACWAEL) the chain is Lumenal. Residues 181-201 (VAIHFCTPGTSFAGHLAGILV) traverse the membrane as a helical segment. H195 is a catalytic residue. The Cytoplasmic segment spans residues 202–315 (GLMYTQGPLK…RQRLHRFDGQ (114 aa)). The tract at residues 269-284 (SEEEQLERALRASIWD) is ubiquitin-binding domain (UBD). The segment at 301-315 (PEEMRRQRLHRFDGQ) is VCP/p97-interacting motif (VIM).

This sequence belongs to the peptidase S54 family. In terms of assembly, interacts with BIK and STEAP3. Interacts (via C-terminal domain) with VCP/P97. Interacts with ubiquitin and ubiquitinated proteins. As to expression, expressed in testis (at protein level). Expressed in intestine, lung, brain, kidney, epididymis, stomach, muscle, spleen, liver, heart and testis.

Its subcellular location is the endoplasmic reticulum membrane. The protein resides in the mitochondrion membrane. It carries out the reaction Cleaves type-1 transmembrane domains using a catalytic dyad composed of serine and histidine that are contributed by different transmembrane domains.. Its activity is regulated as follows. Inhibited by aprotinin. Its function is as follows. Intramembrane-cleaving serine protease that cleaves single transmembrane or multi-pass membrane proteins in the hydrophobic plane of the membrane, luminal loops and juxtamembrane regions. Involved in regulated intramembrane proteolysis and the subsequent release of functional polypeptides from their membrane anchors. Functional component of endoplasmic reticulum-associated degradation (ERAD) for misfolded membrane proteins. Required for the degradation process of some specific misfolded endoplasmic reticulum (ER) luminal proteins. Participates in the transfer of misfolded proteins from the ER to the cytosol, where they are destroyed by the proteasome in a ubiquitin-dependent manner. Functions in BIK, MPZ, PKD1, PTCRA, RHO, STEAP3 and TRAC processing. Involved in the regulation of exosomal secretion; inhibits the TSAP6-mediated secretion pathway. Involved in the regulation of apoptosis; modulates BIK-mediated apoptotic activity. Also plays a role in the regulation of spermatogenesis; inhibits apoptotic activity in spermatogonia. This chain is Rhomboid-related protein 4 (Rhbdd1), found in Mus musculus (Mouse).